Reading from the N-terminus, the 199-residue chain is UPF0462 protein C4orf33 homolog (199 aa).

The protein belongs to the UPF0462 family.

This Rattus norvegicus (Rat) protein is UPF0462 protein C4orf33 homolog.